Here is a 354-residue protein sequence, read N- to C-terminus: Tyrosine recombinase XerH (354 aa).

Residues 48 to 134 (LTKGVKNIDE…AVINFFDFLD (87 aa)) form the Core-binding (CB) domain. Residues 163–346 (KLPEFMSKEE…DNDKLKLAAQ (184 aa)) form the Tyr recombinase domain. Catalysis depends on residues Arg205, Lys231, His298, Arg301, and His324. Tyr333 (O-(3'-phospho-DNA)-tyrosine intermediate) is an active-site residue.

This sequence belongs to the 'phage' integrase family. XerH subfamily.

Its subcellular location is the cytoplasm. FtsK is required for efficient recombination. Functionally, site-specific tyrosine recombinase, which acts by catalyzing the cutting and rejoining of the recombining DNA molecules. Binds to the complete atypical dif motif (difH) site and to both halves separately. The protein is Tyrosine recombinase XerH of Campylobacter jejuni subsp. jejuni serotype O:2 (strain ATCC 700819 / NCTC 11168).